The primary structure comprises 758 residues: MGLPDGSDQGTHQTQALLSAAQEMELQRRDYHVERPLLNQEQLEDLGHWGPAAKTHQWRTWFRCSRARAHSLLLQHVPVLGWLPRYPVREWLLGDLLSGLSVAIMQLPQGLAYALLAGLPPMFGLYSSFYPVFIYFLFGTSRHISVGTFAVMSVMVGSVTESLTADKAFVQGLNATADDARVQVAYTLSFLVGLFQVGLGLVHFGFVVTYLSEPLVRSYTTAASVQVLVSQLKYVFGIKLSSHSGPLSVIYTVLEVCAQLPETVPGTVVTAIVAGVALVLVKLLNEKLHRRLPLPIPGELLTLIGATGISYGVKLNDRFKVDVVGNITTGLIPPVAPKTELFATLVGNAFAIAVVGFAIAISLGKIFALRHGYRVDSNQELVALGLSNLIGGFFQCFPVSCSMSRSLVQESTGGNTQVAGAVSSLFILLIIVKLGELFRDLPKAVLAAVIIVNLKGMMKQFSDICSLWKANRVDLLIWLVTFVATILLNLDIGLAVSIVFSLLLVVVRMQLPHYSVLGQVPDTDIYRDVAEYSGAKEVPGVKVFRSSATLYFANAELYSDSLKEKCGVDVDRLITQKKKRIKKQEMKLKRMKKAKKSQKQDASSKISSVSVNVNTNLEDVKSNDVEGSEAKVHQGEELQDVVSSNQEDAKAPTMTSLKSLGLPQPGFHSLILDLSTLSFVDTVCIKSLKNIFRDFREIEVEVYIAACYSPVVAQLEAGHFFDESITKQHVFASVHDAVTFALSHRKSVPKSPVLATKL.

Over 1-117 the chain is Cytoplasmic; that stretch reads MGLPDGSDQG…PQGLAYALLA (117 aa). A helical membrane pass occupies residues 118 to 138; sequence GLPPMFGLYSSFYPVFIYFLF. At 139-187 the chain is on the extracellular side; that stretch reads GTSRHISVGTFAVMSVMVGSVTESLTADKAFVQGLNATADDARVQVAYT. The N-linked (GlcNAc) asparagine glycan is linked to Asn-174. Residues 188–208 form a helical membrane-spanning segment; the sequence is LSFLVGLFQVGLGLVHFGFVV. At 209–263 the chain is on the cytoplasmic side; sequence TYLSEPLVRSYTTAASVQVLVSQLKYVFGIKLSSHSGPLSVIYTVLEVCAQLPET. A helical transmembrane segment spans residues 264 to 284; it reads VPGTVVTAIVAGVALVLVKLL. Residues 285-292 lie on the Extracellular side of the membrane; the sequence is NEKLHRRL. Residues 293–313 form a helical membrane-spanning segment; it reads PLPIPGELLTLIGATGISYGV. Residues 314–340 are Cytoplasmic-facing; it reads KLNDRFKVDVVGNITTGLIPPVAPKTE. Residues 341 to 361 form a helical membrane-spanning segment; the sequence is LFATLVGNAFAIAVVGFAIAI. The Extracellular segment spans residues 362-380; the sequence is SLGKIFALRHGYRVDSNQE. The chain crosses the membrane as a helical span at residues 381–401; the sequence is LVALGLSNLIGGFFQCFPVSC. Residues 402 to 417 are Cytoplasmic-facing; that stretch reads SMSRSLVQESTGGNTQ. The chain crosses the membrane as a helical span at residues 418–438; the sequence is VAGAVSSLFILLIIVKLGELF. Residues 439–485 lie on the Extracellular side of the membrane; the sequence is RDLPKAVLAAVIIVNLKGMMKQFSDICSLWKANRVDLLIWLVTFVAT. Residues 486–506 form a helical membrane-spanning segment; it reads ILLNLDIGLAVSIVFSLLLVV. The Cytoplasmic segment spans residues 507-758; the sequence is VRMQLPHYSV…PKSPVLATKL (252 aa). Residues 531-741 form the STAS domain; it reads EYSGAKEVPG…ASVHDAVTFA (211 aa). The interval 585 to 608 is disordered; that stretch reads EMKLKRMKKAKKSQKQDASSKISS. Residue Ser-751 is modified to Phosphoserine.

Interacts (via C-terminal domain) with PDZK1 (via C-terminal PDZ domain); the interaction induces chloride and oxalate exchange transport. Interacts with CFTR, SLC26A3 and NHERF1. Interacts with AHCYL1; the interaction increases SLC26A6 activity. In terms of processing, N-glycosylated. Glycosylation at Asn-174 positively regulates its chloride oxalate exchanger activity. In terms of tissue distribution, expressed in kidney (at protein level). Expressed in spermatogenic cells. Expressed in intestine, kidney, testis, brain, muscle, heart, and stomach. Expressed in the submandibular and sublingual salivary glands. As to expression, highly expressed in stomach, kidney, heart and small intestine, low in the lung, liver, testis, brain, skeletal muscle and colon. Expressed in the heart.

It localises to the cell membrane. The protein resides in the apical cell membrane. Its subcellular location is the cytoplasmic vesicle membrane. It is found in the microsome. It carries out the reaction 2 hydrogencarbonate(in) + chloride(out) = 2 hydrogencarbonate(out) + chloride(in). The enzyme catalyses oxalate(in) + chloride(out) = oxalate(out) + chloride(in). It catalyses the reaction oxalate(in) + formate(out) = oxalate(out) + formate(in). The catalysed reaction is oxalate(in) + sulfate(out) = oxalate(out) + sulfate(in). It carries out the reaction formate(in) + chloride(out) = formate(out) + chloride(in). The enzyme catalyses sulfate(in) = sulfate(out). Its activity is regulated as follows. Apical membrane chloride-bicarbonate exchange activity of the pancreatic duct is inhibited by 4,4'-diisothiocyanatostilbene-2,2'-disulfonic acid (DIDS). Oxalate secretion in the duodenum and chloride-formate exchange activity is inhibited by DIDS. Chloride-formate exchange activity and transcellular sulfate absorption is inhibited by 4,4'-diisothiocyanatostilbene-2,2'-disulfonic acid (DIDS). Its function is as follows. Apical membrane anion-exchanger with wide epithelial distribution that plays a role as a component of the pH buffering system for maintaining acid-base homeostasis. Acts as a versatile DIDS-sensitive inorganic and organic anion transporter that mediates the uptake of monovalent anions like chloride, bicarbonate, formate and hydroxyl ion and divalent anions like sulfate and oxalate. Functions in multiple exchange modes involving pairs of these anions, which include chloride-bicarbonate, chloride-oxalate, oxalate-formate, oxalate-sulfate and chloride-formate exchange. Apical membrane chloride-bicarbonate exchanger that mediates luminal chloride absorption and bicarbonate secretion by the small intestinal brush border membrane and contributes to intracellular pH regulation in the duodenal upper villous epithelium during proton-coupled peptide absorption, possibly by providing a bicarbonate import pathway. Its association with carbonic anhydrase CA2 forms a bicarbonate transport metabolon; hence maximizes the local concentration of bicarbonate at the transporter site. Also mediates intestinal chloride absorption and oxalate secretion, thereby preventing hyperoxaluria and calcium oxalate urolithiasis. Transepithelial oxalate secretion, chloride-formate, chloride-oxalate and chloride-bicarbonate transport activities in the duodenum are inhibited by PKC activation in a calcium-independent manner. The apical membrane chloride-bicarbonate exchanger also provides a major route for fluid and bicarbonate secretion into the proximal tubules of the kidney as well as into the proximal part of the interlobular pancreatic ductal tree, where it mediates electrogenic chloride-bicarbonate exchange with a chloride-bicarbonate stoichiometry of 1:2, and hence will dilute and alkalinize protein-rich acinar secretion. Also mediates the transcellular sulfate absorption and oxalate secretion across the apical membrane in the duodenum and the formate ion efflux at the apical brush border of cells in the proximal tubules of kidney. Plays a role in sperm capacitation by increasing intracellular pH. Mediates electrogenic chloride-bicarbonate exchange with a chloride-bicarbonate stoichiometry of 1:2. Also mediates exchange of chloride-formate and chloride-oxalate ions. Mediates transcellular sulfate absorption. This chain is Solute carrier family 26 member 6, found in Mus musculus (Mouse).